A 333-amino-acid chain; its full sequence is 4-hydroxy-3-methylbut-2-enyl diphosphate reductase (333 aa).

[4Fe-4S] cluster is bound at residue Cys34. Residues His63 and His96 each contribute to the (2E)-4-hydroxy-3-methylbut-2-enyl diphosphate site. His63 and His96 together coordinate dimethylallyl diphosphate. Isopentenyl diphosphate is bound by residues His63 and His96. Residue Cys118 participates in [4Fe-4S] cluster binding. A (2E)-4-hydroxy-3-methylbut-2-enyl diphosphate-binding site is contributed by His146. His146 contacts dimethylallyl diphosphate. Isopentenyl diphosphate is bound at residue His146. Residue Glu148 is the Proton donor of the active site. Thr186 is a binding site for (2E)-4-hydroxy-3-methylbut-2-enyl diphosphate. Cys216 contributes to the [4Fe-4S] cluster binding site. (2E)-4-hydroxy-3-methylbut-2-enyl diphosphate-binding residues include Ser244, Ser245, Asn246, and Ser289. Dimethylallyl diphosphate is bound by residues Ser244, Ser245, Asn246, and Ser289. The isopentenyl diphosphate site is built by Ser244, Ser245, Asn246, and Ser289.

This sequence belongs to the IspH family. The cofactor is [4Fe-4S] cluster.

The catalysed reaction is isopentenyl diphosphate + 2 oxidized [2Fe-2S]-[ferredoxin] + H2O = (2E)-4-hydroxy-3-methylbut-2-enyl diphosphate + 2 reduced [2Fe-2S]-[ferredoxin] + 2 H(+). It carries out the reaction dimethylallyl diphosphate + 2 oxidized [2Fe-2S]-[ferredoxin] + H2O = (2E)-4-hydroxy-3-methylbut-2-enyl diphosphate + 2 reduced [2Fe-2S]-[ferredoxin] + 2 H(+). The protein operates within isoprenoid biosynthesis; dimethylallyl diphosphate biosynthesis; dimethylallyl diphosphate from (2E)-4-hydroxy-3-methylbutenyl diphosphate: step 1/1. Its pathway is isoprenoid biosynthesis; isopentenyl diphosphate biosynthesis via DXP pathway; isopentenyl diphosphate from 1-deoxy-D-xylulose 5-phosphate: step 6/6. In terms of biological role, catalyzes the conversion of 1-hydroxy-2-methyl-2-(E)-butenyl 4-diphosphate (HMBPP) into a mixture of isopentenyl diphosphate (IPP) and dimethylallyl diphosphate (DMAPP). Acts in the terminal step of the DOXP/MEP pathway for isoprenoid precursor biosynthesis. This chain is 4-hydroxy-3-methylbut-2-enyl diphosphate reductase, found in Mycobacterium sp. (strain JLS).